The sequence spans 526 residues: Lysine--tRNA ligase (526 aa).

Positions 30–38 (PSGYVHIGN) match the 'HIGH' region motif. Residues Asp-95, Cys-99, His-100, His-106, Cys-177, and Cys-199 each contribute to the Zn(2+) site. The 'KMSKS' region signature appears at 280–284 (KMSGS).

This sequence belongs to the class-I aminoacyl-tRNA synthetase family. Zn(2+) is required as a cofactor.

Its subcellular location is the cytoplasm. The enzyme catalyses tRNA(Lys) + L-lysine + ATP = L-lysyl-tRNA(Lys) + AMP + diphosphate. This chain is Lysine--tRNA ligase (lysS), found in Thermococcus kodakarensis (strain ATCC BAA-918 / JCM 12380 / KOD1) (Pyrococcus kodakaraensis (strain KOD1)).